Consider the following 204-residue polypeptide: Proteasome subunit beta type-3 (204 aa).

The protein belongs to the peptidase T1B family. The 26S proteasome consists of a 20S proteasome core and two 19S regulatory subunits. The 20S proteasome core is composed of 28 subunits that are arranged in four stacked rings, resulting in a barrel-shaped structure. The two end rings are each formed by seven alpha subunits, and the two central rings are each formed by seven beta subunits. The catalytic chamber with the active sites is on the inside of the barrel.

Its subcellular location is the cytoplasm. It localises to the nucleus. In terms of biological role, non-catalytic component of the proteasome, a multicatalytic proteinase complex which is characterized by its ability to cleave peptides with Arg, Phe, Tyr, Leu, and Glu adjacent to the leaving group at neutral or slightly basic pH. The proteasome has an ATP-dependent proteolytic activity. The chain is Proteasome subunit beta type-3 (PBC1) from Oryza sativa subsp. japonica (Rice).